A 548-amino-acid polypeptide reads, in one-letter code: Chaperonin GroEL (548 aa).

ATP-binding positions include 30–33 (TLGP), Lys51, 87–91 (DGTTT), Gly415, 479–481 (NAA), and Asp495.

It belongs to the chaperonin (HSP60) family. In terms of assembly, forms a cylinder of 14 subunits composed of two heptameric rings stacked back-to-back. Interacts with the co-chaperonin GroES.

It is found in the cytoplasm. The catalysed reaction is ATP + H2O + a folded polypeptide = ADP + phosphate + an unfolded polypeptide.. Functionally, together with its co-chaperonin GroES, plays an essential role in assisting protein folding. The GroEL-GroES system forms a nano-cage that allows encapsulation of the non-native substrate proteins and provides a physical environment optimized to promote and accelerate protein folding. The polypeptide is Chaperonin GroEL (Klebsiella pneumoniae subsp. pneumoniae (strain ATCC 700721 / MGH 78578)).